We begin with the raw amino-acid sequence, 334 residues long: ADP-L-glycero-D-manno-heptose-6-epimerase (334 aa).

NADP(+)-binding positions include 11-12, 32-33, Lys39, Lys54, 77-81, and Asn94; these read FI, DN, and QGACS. Catalysis depends on Tyr141, which acts as the Proton acceptor. Lys145 serves as a coordination point for NADP(+). Residue Asn171 participates in substrate binding. NADP(+)-binding residues include Val172 and Lys180. Lys180 (proton acceptor) is an active-site residue. Residues Arg182, His189, 203-206, Arg216, and Tyr295 each bind substrate; that span reads FGSN.

It belongs to the NAD(P)-dependent epimerase/dehydratase family. HldD subfamily. In terms of assembly, homopentamer. The cofactor is NADP(+).

It catalyses the reaction ADP-D-glycero-beta-D-manno-heptose = ADP-L-glycero-beta-D-manno-heptose. It functions in the pathway nucleotide-sugar biosynthesis; ADP-L-glycero-beta-D-manno-heptose biosynthesis; ADP-L-glycero-beta-D-manno-heptose from D-glycero-beta-D-manno-heptose 7-phosphate: step 4/4. It participates in bacterial outer membrane biogenesis; LOS core biosynthesis. In terms of biological role, catalyzes the interconversion between ADP-D-glycero-beta-D-manno-heptose and ADP-L-glycero-beta-D-manno-heptose via an epimerization at carbon 6 of the heptose. The sequence is that of ADP-L-glycero-D-manno-heptose-6-epimerase from Neisseria meningitidis serogroup B (strain ATCC BAA-335 / MC58).